A 227-amino-acid chain; its full sequence is MAYPMQLGFQDATSPIMEELLHFHDHTLMIVLLISSLVLYIISLMLTTKLTHTSTMDAQEVETIWTILPAIILILIALPSLRILYMMDEINNPSLTVKTMGHQWYWSYEYTDYEDLSFDSYMIPTSELKPGELRLLEVDNRVVLPMEMTIRMLVSSEDVLHSWAVPSLGLKTDAIPGRLNQTTLMSTRPGLYYGQCSEICGSNHSFMPIVLEMVPLKYFEKWSASML.

Residues 1–14 are Mitochondrial intermembrane-facing; that stretch reads MAYPMQLGFQDATS. The helical transmembrane segment at 15–45 threads the bilayer; the sequence is PIMEELLHFHDHTLMIVLLISSLVLYIISLM. Residues 46–59 are Mitochondrial matrix-facing; it reads LTTKLTHTSTMDAQ. Residues 60 to 87 traverse the membrane as a helical segment; it reads EVETIWTILPAIILILIALPSLRILYMM. Topologically, residues 88–227 are mitochondrial intermembrane; sequence DEINNPSLTV…YFEKWSASML (140 aa). Positions 161, 196, 198, 200, 204, and 207 each coordinate Cu cation. Mg(2+) is bound at residue E198. Y218 bears the Phosphotyrosine mark.

This sequence belongs to the cytochrome c oxidase subunit 2 family. As to quaternary structure, component of the cytochrome c oxidase (complex IV, CIV), a multisubunit enzyme composed of 14 subunits. The complex is composed of a catalytic core of 3 subunits MT-CO1, MT-CO2 and MT-CO3, encoded in the mitochondrial DNA, and 11 supernumerary subunits COX4I, COX5A, COX5B, COX6A, COX6B, COX6C, COX7A, COX7B, COX7C, COX8 and NDUFA4, which are encoded in the nuclear genome. The complex exists as a monomer or a dimer and forms supercomplexes (SCs) in the inner mitochondrial membrane with NADH-ubiquinone oxidoreductase (complex I, CI) and ubiquinol-cytochrome c oxidoreductase (cytochrome b-c1 complex, complex III, CIII), resulting in different assemblies (supercomplex SCI(1)III(2)IV(1) and megacomplex MCI(2)III(2)IV(2)). Found in a complex with TMEM177, COA6, COX18, COX20, SCO1 and SCO2. Interacts with TMEM177 in a COX20-dependent manner. Interacts with COX20. Interacts with COX16. Cu cation is required as a cofactor.

Its subcellular location is the mitochondrion inner membrane. The catalysed reaction is 4 Fe(II)-[cytochrome c] + O2 + 8 H(+)(in) = 4 Fe(III)-[cytochrome c] + 2 H2O + 4 H(+)(out). Its function is as follows. Component of the cytochrome c oxidase, the last enzyme in the mitochondrial electron transport chain which drives oxidative phosphorylation. The respiratory chain contains 3 multisubunit complexes succinate dehydrogenase (complex II, CII), ubiquinol-cytochrome c oxidoreductase (cytochrome b-c1 complex, complex III, CIII) and cytochrome c oxidase (complex IV, CIV), that cooperate to transfer electrons derived from NADH and succinate to molecular oxygen, creating an electrochemical gradient over the inner membrane that drives transmembrane transport and the ATP synthase. Cytochrome c oxidase is the component of the respiratory chain that catalyzes the reduction of oxygen to water. Electrons originating from reduced cytochrome c in the intermembrane space (IMS) are transferred via the dinuclear copper A center (CU(A)) of subunit 2 and heme A of subunit 1 to the active site in subunit 1, a binuclear center (BNC) formed by heme A3 and copper B (CU(B)). The BNC reduces molecular oxygen to 2 water molecules using 4 electrons from cytochrome c in the IMS and 4 protons from the mitochondrial matrix. This chain is Cytochrome c oxidase subunit 2 (MT-CO2), found in Bubalus depressicornis (Lowland anoa).